Consider the following 430-residue polypeptide: 3-phosphoshikimate 1-carboxyvinyltransferase (430 aa).

3 residues coordinate 3-phosphoshikimate: lysine 23, serine 24, and arginine 28. Lysine 23 is a binding site for phosphoenolpyruvate. Positions 95 and 123 each coordinate phosphoenolpyruvate. Positions 169, 171, 315, and 342 each coordinate 3-phosphoshikimate. Glutamine 171 contacts phosphoenolpyruvate. Aspartate 315 acts as the Proton acceptor in catalysis. Positions 346 and 388 each coordinate phosphoenolpyruvate.

This sequence belongs to the EPSP synthase family. As to quaternary structure, monomer.

Its subcellular location is the cytoplasm. The catalysed reaction is 3-phosphoshikimate + phosphoenolpyruvate = 5-O-(1-carboxyvinyl)-3-phosphoshikimate + phosphate. It participates in metabolic intermediate biosynthesis; chorismate biosynthesis; chorismate from D-erythrose 4-phosphate and phosphoenolpyruvate: step 6/7. In terms of biological role, catalyzes the transfer of the enolpyruvyl moiety of phosphoenolpyruvate (PEP) to the 5-hydroxyl of shikimate-3-phosphate (S3P) to produce enolpyruvyl shikimate-3-phosphate and inorganic phosphate. The chain is 3-phosphoshikimate 1-carboxyvinyltransferase from Streptococcus pyogenes serotype M1.